We begin with the raw amino-acid sequence, 254 residues long: Imidazole glycerol phosphate synthase subunit HisF (254 aa).

Residues D12 and D131 contribute to the active site.

It belongs to the HisA/HisF family. In terms of assembly, heterodimer of HisH and HisF.

It localises to the cytoplasm. It carries out the reaction 5-[(5-phospho-1-deoxy-D-ribulos-1-ylimino)methylamino]-1-(5-phospho-beta-D-ribosyl)imidazole-4-carboxamide + L-glutamine = D-erythro-1-(imidazol-4-yl)glycerol 3-phosphate + 5-amino-1-(5-phospho-beta-D-ribosyl)imidazole-4-carboxamide + L-glutamate + H(+). The protein operates within amino-acid biosynthesis; L-histidine biosynthesis; L-histidine from 5-phospho-alpha-D-ribose 1-diphosphate: step 5/9. Functionally, IGPS catalyzes the conversion of PRFAR and glutamine to IGP, AICAR and glutamate. The HisF subunit catalyzes the cyclization activity that produces IGP and AICAR from PRFAR using the ammonia provided by the HisH subunit. The protein is Imidazole glycerol phosphate synthase subunit HisF of Corynebacterium aurimucosum (strain ATCC 700975 / DSM 44827 / CIP 107346 / CN-1) (Corynebacterium nigricans).